Here is a 162-residue protein sequence, read N- to C-terminus: Phosphopantetheine adenylyltransferase (162 aa).

Residue S11 participates in substrate binding. ATP is bound by residues 11-12 (SF) and H19. K43, V76, and R90 together coordinate substrate. Residues 91–93 (GLR), E101, and 126–132 (LKFVSSS) contribute to the ATP site.

This sequence belongs to the bacterial CoaD family. As to quaternary structure, homohexamer. Requires Mg(2+) as cofactor.

Its subcellular location is the cytoplasm. It carries out the reaction (R)-4'-phosphopantetheine + ATP + H(+) = 3'-dephospho-CoA + diphosphate. The protein operates within cofactor biosynthesis; coenzyme A biosynthesis; CoA from (R)-pantothenate: step 4/5. Its function is as follows. Reversibly transfers an adenylyl group from ATP to 4'-phosphopantetheine, yielding dephospho-CoA (dPCoA) and pyrophosphate. The sequence is that of Phosphopantetheine adenylyltransferase from Streptococcus suis (strain 05ZYH33).